The primary structure comprises 86 residues: Weak neurotoxin 10 (86 aa).

Positions 1 to 21 are cleaved as a signal peptide; that stretch reads MKTLLLTLVVVTIVCLDLGYT. 5 disulfide bridges follow: Cys-24–Cys-45, Cys-27–Cys-32, Cys-38–Cys-63, Cys-67–Cys-78, and Cys-79–Cys-84.

Belongs to the three-finger toxin family. Ancestral subfamily. Orphan group II sub-subfamily. In terms of tissue distribution, expressed by the venom gland.

It localises to the secreted. Functionally, binds with low affinity to muscular (alpha-1-beta-1-delta-epsilon/CHRNA1-CHRNB1-CHRND-CHRNE) and very low affinity to neuronal (alpha-7/CHRNA7) nicotinic acetylcholine receptor (nAChR). In Naja sputatrix (Malayan spitting cobra), this protein is Weak neurotoxin 10 (WNTX10).